The sequence spans 473 residues: Ribulose bisphosphate carboxylase large chain (473 aa).

The substrate site is built by Asn-116 and Thr-166. Lys-168 serves as the catalytic Proton acceptor. Substrate is bound at residue Lys-170. Positions 194, 196, and 197 each coordinate Mg(2+). Lys-194 is modified (N6-carboxylysine). Residue His-287 is the Proton acceptor of the active site. Substrate is bound by residues Arg-288, His-320, and Ser-372.

Belongs to the RuBisCO large chain family. Type I subfamily. Heterohexadecamer of 8 large chains and 8 small chains. Requires Mg(2+) as cofactor.

It catalyses the reaction 2 (2R)-3-phosphoglycerate + 2 H(+) = D-ribulose 1,5-bisphosphate + CO2 + H2O. The enzyme catalyses D-ribulose 1,5-bisphosphate + O2 = 2-phosphoglycolate + (2R)-3-phosphoglycerate + 2 H(+). RuBisCO catalyzes two reactions: the carboxylation of D-ribulose 1,5-bisphosphate, the primary event in carbon dioxide fixation, as well as the oxidative fragmentation of the pentose substrate. Both reactions occur simultaneously and in competition at the same active site. The polypeptide is Ribulose bisphosphate carboxylase large chain (Halorhodospira halophila (strain DSM 244 / SL1) (Ectothiorhodospira halophila (strain DSM 244 / SL1))).